Consider the following 135-residue polypeptide: Phosphomevalonate dehydratase small subunit (135 aa).

Serine 67 acts as the Proton acceptor in catalysis.

It belongs to the AcnX type II small subunit family. Heterodimer composed of a large subunit (PMDh-L) and a small subunit (PMDh-S).

The enzyme catalyses (R)-5-phosphomevalonate = (2E)-3-methyl-5-phosphooxypent-2-enoate + H2O. Its pathway is isoprenoid biosynthesis; isopentenyl diphosphate biosynthesis via mevalonate pathway. In terms of biological role, component of a hydro-lyase that catalyzes the dehydration of mevalonate 5-phosphate (MVA5P) to form trans-anhydromevalonate 5-phosphate (tAHMP). Involved in the archaeal mevalonate (MVA) pathway, which provides fundamental precursors for isoprenoid biosynthesis, such as isopentenyl diphosphate (IPP) and dimethylallyl diphosphate (DMAPP). The chain is Phosphomevalonate dehydratase small subunit from Methanopyrus kandleri (strain AV19 / DSM 6324 / JCM 9639 / NBRC 100938).